The chain runs to 511 residues: Probable pectinesterase/pectinesterase inhibitor 17 (511 aa).

Residues 1 to 23 form the signal peptide; it reads MMAFRAYIINFVILCILVASTVS. The segment at 24 to 171 is pectinesterase inhibitor 17; that stretch reads GYNQKDVKAW…SNLLCNTLAI (148 aa). N-linked (GlcNAc...) asparagine glycosylation is found at Asn112 and Asn160. Positions 237–414 are pectinesterase 17; sequence VKQGVYSENL…LRPVLGSTKT (178 aa). Positions 277 and 307 each coordinate substrate. Catalysis depends on Asp330, which acts as the Proton donor; for pectinesterase activity. A disulfide bond links Cys344 and Cys364. Catalysis depends on Asp351, which acts as the Nucleophile; for pectinesterase activity. Substrate is bound by residues Arg418 and Trp420.

The protein in the N-terminal section; belongs to the PMEI family. This sequence in the C-terminal section; belongs to the pectinesterase family. Expressed in siliques.

Its subcellular location is the secreted. The protein resides in the cell wall. The catalysed reaction is [(1-&gt;4)-alpha-D-galacturonosyl methyl ester](n) + n H2O = [(1-&gt;4)-alpha-D-galacturonosyl](n) + n methanol + n H(+). It functions in the pathway glycan metabolism; pectin degradation; 2-dehydro-3-deoxy-D-gluconate from pectin: step 1/5. Its function is as follows. Acts in the modification of cell walls via demethylesterification of cell wall pectin. This chain is Probable pectinesterase/pectinesterase inhibitor 17 (PME17), found in Arabidopsis thaliana (Mouse-ear cress).